Here is a 227-residue protein sequence, read N- to C-terminus: MAYPLQLGLQDATSPIMEELMNFHDHTLMIVFLISSLVLYIISLMLTTKLTHTSTMDAQEVETIWTILPAAILVLIALPSLRILYMMDEINNPVLTVKTMGHQWYWSYEYTDYEDLCFDSYMIPTNDLKPGELRLLEVDNRVVLPMELPIRMLISSEDVLHSWAVPSLGLKTDAIPGRLNQATVSSNRPGLFYGQCSEICGSNHSFMPIVLEMVPLKYFENWSASMI.

Residues 1 to 14 (MAYPLQLGLQDATS) are Mitochondrial intermembrane-facing. A helical membrane pass occupies residues 15-45 (PIMEELMNFHDHTLMIVFLISSLVLYIISLM). Topologically, residues 46–59 (LTTKLTHTSTMDAQ) are mitochondrial matrix. A helical transmembrane segment spans residues 60–87 (EVETIWTILPAAILVLIALPSLRILYMM). At 88–227 (DEINNPVLTV…YFENWSASMI (140 aa)) the chain is on the mitochondrial intermembrane side. His161, Cys196, Glu198, Cys200, His204, and Met207 together coordinate Cu cation. Glu198 is a binding site for Mg(2+). Phosphotyrosine is present on Tyr218.

It belongs to the cytochrome c oxidase subunit 2 family. In terms of assembly, component of the cytochrome c oxidase (complex IV, CIV), a multisubunit enzyme composed of 14 subunits. The complex is composed of a catalytic core of 3 subunits MT-CO1, MT-CO2 and MT-CO3, encoded in the mitochondrial DNA, and 11 supernumerary subunits COX4I, COX5A, COX5B, COX6A, COX6B, COX6C, COX7A, COX7B, COX7C, COX8 and NDUFA4, which are encoded in the nuclear genome. The complex exists as a monomer or a dimer and forms supercomplexes (SCs) in the inner mitochondrial membrane with NADH-ubiquinone oxidoreductase (complex I, CI) and ubiquinol-cytochrome c oxidoreductase (cytochrome b-c1 complex, complex III, CIII), resulting in different assemblies (supercomplex SCI(1)III(2)IV(1) and megacomplex MCI(2)III(2)IV(2)). Found in a complex with TMEM177, COA6, COX18, COX20, SCO1 and SCO2. Interacts with TMEM177 in a COX20-dependent manner. Interacts with COX20. Interacts with COX16. Requires Cu cation as cofactor.

Its subcellular location is the mitochondrion inner membrane. The enzyme catalyses 4 Fe(II)-[cytochrome c] + O2 + 8 H(+)(in) = 4 Fe(III)-[cytochrome c] + 2 H2O + 4 H(+)(out). Functionally, component of the cytochrome c oxidase, the last enzyme in the mitochondrial electron transport chain which drives oxidative phosphorylation. The respiratory chain contains 3 multisubunit complexes succinate dehydrogenase (complex II, CII), ubiquinol-cytochrome c oxidoreductase (cytochrome b-c1 complex, complex III, CIII) and cytochrome c oxidase (complex IV, CIV), that cooperate to transfer electrons derived from NADH and succinate to molecular oxygen, creating an electrochemical gradient over the inner membrane that drives transmembrane transport and the ATP synthase. Cytochrome c oxidase is the component of the respiratory chain that catalyzes the reduction of oxygen to water. Electrons originating from reduced cytochrome c in the intermembrane space (IMS) are transferred via the dinuclear copper A center (CU(A)) of subunit 2 and heme A of subunit 1 to the active site in subunit 1, a binuclear center (BNC) formed by heme A3 and copper B (CU(B)). The BNC reduces molecular oxygen to 2 water molecules using 4 electrons from cytochrome c in the IMS and 4 protons from the mitochondrial matrix. This chain is Cytochrome c oxidase subunit 2 (MT-CO2), found in Micaelamys namaquensis (Namaqua rock rat).